We begin with the raw amino-acid sequence, 196 residues long: Probable GTP-binding protein EngB (196 aa).

In terms of domain architecture, EngB-type G spans 24–196 (ELSEVALSGR…IWNLIEPYIS (173 aa)). GTP is bound by residues 32–39 (GRSNVGKS), 59–63 (GKTQT), 77–80 (DVPG), 144–147 (TKED), and 176–178 (YSS). Residues S39 and T61 each contribute to the Mg(2+) site.

It belongs to the TRAFAC class TrmE-Era-EngA-EngB-Septin-like GTPase superfamily. EngB GTPase family. It depends on Mg(2+) as a cofactor.

Its function is as follows. Necessary for normal cell division and for the maintenance of normal septation. This chain is Probable GTP-binding protein EngB, found in Staphylococcus aureus (strain Mu3 / ATCC 700698).